Consider the following 252-residue polypeptide: Bridging integrator 3 homolog (252 aa).

In terms of domain architecture, BAR spans 8 to 231 (GGPKKQIVPK…VDEVQLSDAE (224 aa)). Coiled coils occupy residues 17–57 (KTVE…MSKS), 119–150 (SLNMAVKRREQALQDYKRLQTKVEKYEEKDKT), and 224–244 (EVQLSDAEREQENEARLAELR).

Its subcellular location is the cytoplasm. The protein localises to the cytoskeleton. Involved in cytokinesis and septation where it has a role in the localization of F-actin. The chain is Bridging integrator 3 homolog (bin3) from Xenopus laevis (African clawed frog).